The chain runs to 383 residues: MNCPHYQTQTCISCRWLETPYADQLTQKQTHLQQQISILDQSRLEWIPPFQSAQSGFRNKAKMVVNGTVERPILGIINERNQPADLTDCPLYPARFAEIFSVLKDFIGRAGLVPYNIAKQKGELKYILLTESRANQTLMLRFVLRSETKLPLMRRELAGLSTKIPDLAVVTANIQPQHAAILEGQKEIFLTEQQVLEERFNGIPLFIRPQGFFQTNPAVAEGLYGTAQNWVKNLPVQRLWDLFCGVGGFGLHCAAALQANTPDVALTGIEISPSAIYSAALSAEKCGLKNVSFQSLDAANFALNQDDKPDLVIVNPPRRGIGKPLAEFLNNLRPQFLLYSSCNAVTMGSDLQSLTHYQMRKIRLFDMFPHTAHYEVLTLLTLK.

Residues C3, C11, C14, and C89 each coordinate [4Fe-4S] cluster. S-adenosyl-L-methionine-binding residues include Q214, F243, E270, and N315. The Nucleophile role is filled by C342.

Belongs to the class I-like SAM-binding methyltransferase superfamily. RNA M5U methyltransferase family. RlmC subfamily.

It catalyses the reaction uridine(747) in 23S rRNA + S-adenosyl-L-methionine = 5-methyluridine(747) in 23S rRNA + S-adenosyl-L-homocysteine + H(+). Its function is as follows. Catalyzes the formation of 5-methyl-uridine at position 747 (m5U747) in 23S rRNA. The chain is 23S rRNA (uracil(747)-C(5))-methyltransferase RlmC from Actinobacillus succinogenes (strain ATCC 55618 / DSM 22257 / CCUG 43843 / 130Z).